Consider the following 338-residue polypeptide: Nucleoid-associated protein HI_0839 (338 aa).

This sequence belongs to the YejK family.

It localises to the cytoplasm. The protein resides in the nucleoid. In Haemophilus influenzae (strain ATCC 51907 / DSM 11121 / KW20 / Rd), this protein is Nucleoid-associated protein HI_0839.